Here is a 77-residue protein sequence, read N- to C-terminus: Translation initiation factor IF-1, chloroplastic (77 aa).

Positions 1–71 (MKEQKLIHEG…TRGRIIYRLR (71 aa)) constitute an S1-like domain.

It belongs to the IF-1 family. Component of the 30S ribosomal translation pre-initiation complex which assembles on the 30S ribosome in the order IF-2 and IF-3, IF-1 and N-formylmethionyl-tRNA(fMet); mRNA recruitment can occur at any time during PIC assembly.

Its subcellular location is the plastid. It localises to the chloroplast. One of the essential components for the initiation of protein synthesis. Stabilizes the binding of IF-2 and IF-3 on the 30S subunit to which N-formylmethionyl-tRNA(fMet) subsequently binds. Helps modulate mRNA selection, yielding the 30S pre-initiation complex (PIC). Upon addition of the 50S ribosomal subunit IF-1, IF-2 and IF-3 are released leaving the mature 70S translation initiation complex. This chain is Translation initiation factor IF-1, chloroplastic, found in Calycanthus floridus var. glaucus (Eastern sweetshrub).